The sequence spans 774 residues: C6 finger domain transcription factor nscR (774 aa).

Residues 17-43 (CELCRERKIKCDKVDPCNNCVSAGVVC) constitute a DNA-binding region (zn(2)-C6 fungal-type). 3 disordered regions span residues 61–94 (RPMS…SGAV), 536–559 (LQLP…PQEH), and 665–697 (PTFS…SDLS). Residues 67 to 78 (FVPPRAPTPVAG) show a composition bias toward pro residues. Residues 536–548 (LQLPQPSNGSSQP) are compositionally biased toward low complexity. A compositionally biased stretch (polar residues) spans 665 to 674 (PTFSLGSSTG). The segment covering 675–697 (TSAAPTPRSRASSTPSDTLSDLS) has biased composition (low complexity).

Its subcellular location is the nucleus. Its function is as follows. Transcription factor that specifically regulates the neosartoricin biosynthesis gene cluster. The sequence is that of C6 finger domain transcription factor nscR from Aspergillus fumigatus (strain ATCC MYA-4609 / CBS 101355 / FGSC A1100 / Af293) (Neosartorya fumigata).